The primary structure comprises 304 residues: 2-oxoacid:ferredoxin oxidoreductase 2, subunit beta (304 aa).

Residues Cys12, Cys15, and Cys46 each coordinate [4Fe-4S] cluster. Thiamine diphosphate is bound by residues Ile44–Ser47 and His65. Asp90 provides a ligand contact to Mg(2+). Residue Gly91–Asp92 participates in thiamine diphosphate binding. Mg(2+) contacts are provided by Asn118 and Val120. Gly122–Leu123 serves as a coordination point for thiamine diphosphate. Cys197 contributes to the [4Fe-4S] cluster binding site.

In terms of assembly, heterodimer composed of an alpha and a beta subunit. Requires [4Fe-4S] cluster as cofactor. It depends on thiamine diphosphate as a cofactor. Mg(2+) serves as cofactor.

It carries out the reaction a 2-oxocarboxylate + 2 oxidized [2Fe-2S]-[ferredoxin] + CoA = an acyl-CoA + 2 reduced [2Fe-2S]-[ferredoxin] + CO2 + H(+). Functionally, catalyzes the coenzyme A-dependent oxidative decarboxylation of different 2-oxoacids such as 2-oxoglutarate, pyruvate and 2-oxobutyrate to form their CoA derivatives. The polypeptide is 2-oxoacid:ferredoxin oxidoreductase 2, subunit beta (Sulfurisphaera tokodaii (strain DSM 16993 / JCM 10545 / NBRC 100140 / 7) (Sulfolobus tokodaii)).